The sequence spans 1378 residues: Macrophage-stimulating protein receptor (1378 aa).

Residues 1 to 23 (MGLPLPLLQSSLLLMLLLRLSAA) form the signal peptide. Residues 25 to 960 (TNLNWQCPRI…RSSPGRASQR (936 aa)) are Extracellular-facing. The Sema domain maps to 33–524 (RIPYAASRDF…SGDQVFKVPI (492 aa)). N91 is a glycosylation site (N-linked (GlcNAc...) asparagine). 7 disulfides stabilise this stretch: C102/C105, C108/C163, C136/C144, C175/C178, C301/C368, C386/C409, and C387/C424. N-linked (GlcNAc...) asparagine glycans are attached at residues N391, N460, and N490. 4 cysteine pairs are disulfide-bonded: C529/C547, C535/C569, C538/C554, and C550/C560. IPT/TIG domains are found at residues 571-673 (PEIS…FRVE), 686-769 (PVLT…FHYK), and 772-864 (PIVL…FRFL). 4 N-linked (GlcNAc...) asparagine glycosylation sites follow: N656, N722, N845, and N901. Residues 961–981 (ILLIALLVLILLVAVLAVALI) traverse the membrane as a helical segment. Residues 982 to 1378 (FNSRRRKKQL…RPLSEPPLPT (397 aa)) are Cytoplasmic-facing. The segment at 1002 to 1026 (SDINDTASGAPNHEESSESRDGTSV) is disordered. A compositionally biased stretch (basic and acidic residues) spans 1013 to 1022 (NHEESSESRD). A Protein kinase domain is found at 1059-1322 (IHTDQVIGKG…ALVLEVKQVV (264 aa)). Residues 1065 to 1073 (IGKGHFGVV), K1091, and 1138 to 1141 (LPYM) each bind ATP. The active-site Proton acceptor is the D1185. R1189 contributes to the ATP binding site. Residues Y1215, Y1216, Y1330, and Y1337 each carry the phosphotyrosine; by autocatalysis modification. A disordered region spans residues 1347–1378 (DGSVPPEQVQPSPQHCRSTSKPRPLSEPPLPT). Residues 1349–1360 (SVPPEQVQPSPQ) are compositionally biased toward low complexity.

This sequence belongs to the protein kinase superfamily. Tyr protein kinase family. In terms of assembly, heterodimer of an alpha chain and a beta chain which are disulfide linked. Binds PLXNB1. Associates with and is negatively regulated by HYAL2. Interacts when phosphorylated with downstream effectors including PIK3R1, PCLG1, GRB2 and GAB1. Interacts with integrin beta1/ITGB1 in a ligand-independent fashion. Isoform sf-Stk forms covalent heterodimers with friend spleen focus-forming virus (FSFFV) gp55. Post-translationally, proteolytic processing yields the two subunits. In terms of processing, autophosphorylated in response to ligand binding on Tyr-1215 and Tyr-1216 in the kinase domain leading to further phosphorylation of Tyr-1330 and Tyr-1337 in the C-terminal multifunctional docking site. Ubiquitinated. Ubiquitination by CBL regulates the receptor stability and activity through proteasomal degradation. Post-translationally, O-mannosylation of IPT/TIG domains on Thr or Ser residues by TMEM260 is required for protein maturation. O-mannosylated residues are composed of single mannose glycans that are not elongated or modified. As to expression, expressed in liver, skin, lung, brain, testis and kidney.

Its subcellular location is the membrane. It catalyses the reaction L-tyrosyl-[protein] + ATP = O-phospho-L-tyrosyl-[protein] + ADP + H(+). In its inactive state, the C-terminal tail interacts with the catalytic domain and inhibits the kinase activity. Upon ligand binding, the C-terminal tail is displaced and becomes phosphorylated, thus increasing the kinase activity. Functionally, receptor tyrosine kinase that transduces signals from the extracellular matrix into the cytoplasm by binding to MST1 ligand. Regulates many physiological processes including cell survival, migration and differentiation. Ligand binding at the cell surface induces autophosphorylation of RON on its intracellular domain that provides docking sites for downstream signaling molecules. Following activation by ligand, interacts with the PI3-kinase subunit PIK3R1, PLCG1 or the adapter GAB1. Recruitment of these downstream effectors by RON leads to the activation of several signaling cascades including the RAS-ERK, PI3 kinase-AKT, or PLCgamma-PKC. RON signaling activates the wound healing response by promoting epithelial cell migration, proliferation as well as survival at the wound site. Also plays a role in the innate immune response by regulating the migration and phagocytic activity of macrophages. Alternatively, RON can also promote signals such as cell migration and proliferation in response to growth factors other than MST1 ligand. The protein is Macrophage-stimulating protein receptor (Mst1r) of Mus musculus (Mouse).